The primary structure comprises 536 residues: Membrane protein insertase YidC (536 aa).

The chain crosses the membrane as a helical span at residues 14–34 (ILIATAISLLFFIPYSYFFAP). The interval 43–69 (STSMERAEQQAAPQTSSSPKEGQVSSV) is disordered. The segment covering 53 to 68 (AAPQTSSSPKEGQVSS) has biased composition (polar residues). Transmembrane regions (helical) follow at residues 312–332 (VVEYGFITFFAKPLFLLLDWL), 339–359 (WGWAIVLLTLVVRIILFPLTY), 401–421 (GANPMGGCLPLLLQMPIFFAI), 436–456 (WILWINDLSVMDPYFILPILM), and 484–504 (PLIFTFFFVTFPSGLVLYWFV).

This sequence belongs to the OXA1/ALB3/YidC family. Type 1 subfamily. Interacts with the Sec translocase complex via SecD. Specifically interacts with transmembrane segments of nascent integral membrane proteins during membrane integration.

The protein localises to the cell inner membrane. Functionally, required for the insertion and/or proper folding and/or complex formation of integral membrane proteins into the membrane. Involved in integration of membrane proteins that insert both dependently and independently of the Sec translocase complex, as well as at least some lipoproteins. Aids folding of multispanning membrane proteins. The sequence is that of Membrane protein insertase YidC from Wolinella succinogenes (strain ATCC 29543 / DSM 1740 / CCUG 13145 / JCM 31913 / LMG 7466 / NCTC 11488 / FDC 602W) (Vibrio succinogenes).